Here is a 331-residue protein sequence, read N- to C-terminus: Ketol-acid reductoisomerase (NADP(+)) (331 aa).

One can recognise a KARI N-terminal Rossmann domain in the interval 2–182; that stretch reads AKVYYDEDAN…GGTKGGVLET (181 aa). NADP(+) is bound by residues 25 to 28, S51, S53, and 83 to 86; these read YGSQ and DEKQ. The active site involves H108. An NADP(+)-binding site is contributed by G134. The region spanning 183 to 328 is the KARI C-terminal knotted domain; the sequence is TFKDETETDL…VELRAMMPWL (146 aa). Positions 191, 195, 227, and 231 each coordinate Mg(2+). Residue S252 participates in substrate binding.

It belongs to the ketol-acid reductoisomerase family. Mg(2+) serves as cofactor.

The catalysed reaction is (2R)-2,3-dihydroxy-3-methylbutanoate + NADP(+) = (2S)-2-acetolactate + NADPH + H(+). It catalyses the reaction (2R,3R)-2,3-dihydroxy-3-methylpentanoate + NADP(+) = (S)-2-ethyl-2-hydroxy-3-oxobutanoate + NADPH + H(+). It participates in amino-acid biosynthesis; L-isoleucine biosynthesis; L-isoleucine from 2-oxobutanoate: step 2/4. Its pathway is amino-acid biosynthesis; L-valine biosynthesis; L-valine from pyruvate: step 2/4. Involved in the biosynthesis of branched-chain amino acids (BCAA). Catalyzes an alkyl-migration followed by a ketol-acid reduction of (S)-2-acetolactate (S2AL) to yield (R)-2,3-dihydroxy-isovalerate. In the isomerase reaction, S2AL is rearranged via a Mg-dependent methyl migration to produce 3-hydroxy-3-methyl-2-ketobutyrate (HMKB). In the reductase reaction, this 2-ketoacid undergoes a metal-dependent reduction by NADPH to yield (R)-2,3-dihydroxy-isovalerate. The chain is Ketol-acid reductoisomerase (NADP(+)) from Clostridium novyi (strain NT).